The sequence spans 164 residues: Large ribosomal subunit protein uL11 (164 aa).

It belongs to the universal ribosomal protein uL11 family. In terms of assembly, part of the ribosomal stalk of the 50S ribosomal subunit. Interacts with L10 and the large rRNA to form the base of the stalk. L10 forms an elongated spine to which L12 dimers bind in a sequential fashion forming a multimeric L10(L12)X complex.

In terms of biological role, forms part of the ribosomal stalk which helps the ribosome interact with GTP-bound translation factors. In Pyrococcus furiosus (strain ATCC 43587 / DSM 3638 / JCM 8422 / Vc1), this protein is Large ribosomal subunit protein uL11.